We begin with the raw amino-acid sequence, 145 residues long: 3-hydroxyacyl-[acyl-carrier-protein] dehydratase FabZ (145 aa).

The active site involves His51.

The protein belongs to the thioester dehydratase family. FabZ subfamily.

The protein localises to the cytoplasm. It catalyses the reaction a (3R)-hydroxyacyl-[ACP] = a (2E)-enoyl-[ACP] + H2O. In terms of biological role, involved in unsaturated fatty acids biosynthesis. Catalyzes the dehydration of short chain beta-hydroxyacyl-ACPs and long chain saturated and unsaturated beta-hydroxyacyl-ACPs. The sequence is that of 3-hydroxyacyl-[acyl-carrier-protein] dehydratase FabZ from Staphylococcus haemolyticus (strain JCSC1435).